A 262-amino-acid chain; its full sequence is ELL-associated factor 2 (262 aa).

A necessary for interaction with ELL region spans residues 17 to 104 (LKLGESFEKQ…TGECRLEKLS (88 aa)). Positions 124–144 (LEQQQQQMWNPPRTSNLVQHS) are enriched in polar residues. Disordered stretches follow at residues 124–154 (LEQQQQQMWNPPRTSNLVQHSPSEDKLSPTS) and 170–232 (MDQM…ADTT). Phosphoserine occurs at positions 146, 151, and 154. Over residues 174–192 (SSCDSSSDSRSSSSSSSED) the composition is skewed to low complexity. The tract at residues 177 to 262 (DSSSDSRSSS…LSESDSDSED (86 aa)) is necessary for transactivation activity. The interval 248-262 (RSDLQLSESDSDSED) is necessary for interaction with TCEA1 and transactivation activity.

Belongs to the EAF family. Component of the super elongation complex (SEC), at least composed of EAF1, EAF2, CDK9, MLLT3/AF9, AFF (AFF1 or AFF4), the P-TEFb complex and ELL (ELL, ELL2 or ELL3). Interacts with ELL, ELL2 and TCEA1.

The protein localises to the nucleus speckle. Its function is as follows. Acts as a transcriptional transactivator of ELL, ELL2 and TCEA1 elongation activities. Potent inducer of apoptosis in prostatic and non-prostatic cell lines. The sequence is that of ELL-associated factor 2 (Eaf2) from Rattus norvegicus (Rat).